Reading from the N-terminus, the 99-residue chain is uncharacterized protein (99 aa).

It is found in the host cytoplasm. This is an uncharacterized protein from Escherichia phage Mu (Bacteriophage Mu).